A 450-amino-acid chain; its full sequence is D-inositol 3-phosphate glycosyltransferase (450 aa).

His26 is a binding site for 1D-myo-inositol 3-phosphate. Residues 32–33 (QP) and Gly40 contribute to the UDP-N-acetyl-alpha-D-glucosamine site. Residues 37–42 (DAGGMN), Lys95, Tyr128, Thr152, and Arg172 each bind 1D-myo-inositol 3-phosphate. Residues Arg246, Lys251, and Gln313 each coordinate UDP-N-acetyl-alpha-D-glucosamine. The Mg(2+) site is built by Tyr322, Arg323, and Ala325. UDP-N-acetyl-alpha-D-glucosamine is bound by residues Glu335 and Glu343. Thr349 is a Mg(2+) binding site.

It belongs to the glycosyltransferase group 1 family. MshA subfamily. As to quaternary structure, homodimer.

It catalyses the reaction 1D-myo-inositol 3-phosphate + UDP-N-acetyl-alpha-D-glucosamine = 1D-myo-inositol 2-acetamido-2-deoxy-alpha-D-glucopyranoside 3-phosphate + UDP + H(+). In terms of biological role, catalyzes the transfer of a N-acetyl-glucosamine moiety to 1D-myo-inositol 3-phosphate to produce 1D-myo-inositol 2-acetamido-2-deoxy-glucopyranoside 3-phosphate in the mycothiol biosynthesis pathway. The protein is D-inositol 3-phosphate glycosyltransferase of Mycolicibacterium vanbaalenii (strain DSM 7251 / JCM 13017 / BCRC 16820 / KCTC 9966 / NRRL B-24157 / PYR-1) (Mycobacterium vanbaalenii).